The primary structure comprises 580 residues: Aspartate--tRNA ligase (580 aa).

Glu-173 provides a ligand contact to L-aspartate. The tract at residues Gln-195–Lys-198 is aspartate. Arg-217 is a binding site for L-aspartate. ATP is bound by residues Arg-217–Glu-219 and Gln-226. His-443 is a binding site for L-aspartate. Glu-477 provides a ligand contact to ATP. L-aspartate is bound at residue Arg-484. Residue Gly-529–Arg-532 participates in ATP binding.

This sequence belongs to the class-II aminoacyl-tRNA synthetase family. Type 1 subfamily. As to quaternary structure, homodimer.

The protein localises to the cytoplasm. It catalyses the reaction tRNA(Asp) + L-aspartate + ATP = L-aspartyl-tRNA(Asp) + AMP + diphosphate. Functionally, catalyzes the attachment of L-aspartate to tRNA(Asp) in a two-step reaction: L-aspartate is first activated by ATP to form Asp-AMP and then transferred to the acceptor end of tRNA(Asp). This is Aspartate--tRNA ligase from Malacoplasma penetrans (strain HF-2) (Mycoplasma penetrans).